Consider the following 197-residue polypeptide: ATP-dependent Clp protease proteolytic subunit (197 aa).

The active-site Nucleophile is Ser98. His123 is a catalytic residue.

This sequence belongs to the peptidase S14 family. Fourteen ClpP subunits assemble into 2 heptameric rings which stack back to back to give a disk-like structure with a central cavity, resembling the structure of eukaryotic proteasomes.

It localises to the cytoplasm. The enzyme catalyses Hydrolysis of proteins to small peptides in the presence of ATP and magnesium. alpha-casein is the usual test substrate. In the absence of ATP, only oligopeptides shorter than five residues are hydrolyzed (such as succinyl-Leu-Tyr-|-NHMec, and Leu-Tyr-Leu-|-Tyr-Trp, in which cleavage of the -Tyr-|-Leu- and -Tyr-|-Trp bonds also occurs).. Its function is as follows. Cleaves peptides in various proteins in a process that requires ATP hydrolysis. Has a chymotrypsin-like activity. Plays a major role in the degradation of misfolded proteins. This chain is ATP-dependent Clp protease proteolytic subunit, found in Anaplasma phagocytophilum (strain HZ).